Consider the following 457-residue polypeptide: Equilibrative nucleoside transporter 1 (457 aa).

The Cytoplasmic portion of the chain corresponds to 1–12 (MTTSHQPQDRYK). A helical transmembrane segment spans residues 13-29 (AVWLIFFVLGLGTLLPW). Residues 30–82 (NFFITATQYFTSRLNTSQNISLVTNQSCESTEALADPSVSLPARSSLSAIFNN) lie on the Extracellular side of the membrane. 3 N-linked (GlcNAc...) asparagine glycosylation sites follow: Asn44, Asn48, and Asn54. The chain crosses the membrane as a helical span at residues 83 to 107 (VMTLCAMLPLLIFTCLNSFLHQKVS). The Cytoplasmic portion of the chain corresponds to 108–111 (QSLR). A helical membrane pass occupies residues 112-130 (ILGSLLAILLVFLVTATLV). The Extracellular portion of the chain corresponds to 131 to 138 (KVQMDALS). The chain crosses the membrane as a helical span at residues 139–157 (FFIITMIKIVLINSFGAIL). The Cytoplasmic segment spans residues 158-174 (QASLFGLAGVLPANYTA). Residues 175–199 (PIMSGQGLAGFFTSVAMICAVASGS) traverse the membrane as a helical segment. Topologically, residues 200–206 (KLSESAF) are extracellular. Residues 207-227 (GYFITACAVVILAILCYLALP) traverse the membrane as a helical segment. At 228-291 (WMEFYRHYLQ…IKAILKSIWV (64 aa)) the chain is on the cytoplasmic side. Ser254 is modified (phosphoserine). Residues 255–266 (EGEEPRGGREES) show a composition bias toward basic and acidic residues. The disordered stretch occupies residues 255 to 275 (EGEEPRGGREESGVPGPNSLP). Ser273 bears the Phosphoserine mark. The chain crosses the membrane as a helical span at residues 292 to 311 (LALSVCFIFTVTIGLFPAVT). Over 312–323 (AEVESSIAGTSP) the chain is Extracellular. The chain crosses the membrane as a helical span at residues 324 to 343 (WKNCYFIPVACFLNFNVFDW). Residues 344–360 (LGRSLTAICMWPGQDSR) lie on the Cytoplasmic side of the membrane. The chain crosses the membrane as a helical span at residues 361 to 379 (WLPVLVACRVVFIPLLMLC). Residues 380–394 (NVKQHHYLPSLFKHD) lie on the Extracellular side of the membrane. The helical transmembrane segment at 395–414 (VWFITFMAAFAFSNGYLASL) threads the bilayer. The Cytoplasmic segment spans residues 415–432 (CMCFGPKKVKPAEAETAG). A helical membrane pass occupies residues 433–453 (NIMSFFLCLGLALGAVLSFLL). At 454-457 (RALV) the chain is on the extracellular side.

It belongs to the SLC29A/ENT transporter (TC 2.A.57) family. In terms of assembly, identified in a complex with STOM. In terms of tissue distribution, expressed in jejunum, liver and lung. Expressed in testis at the blood-testis barrier (at protein level). Expressed in ventricular myocytes (at protein level). Expressed in kidney.

Its subcellular location is the basolateral cell membrane. It is found in the apical cell membrane. It localises to the cell membrane. The enzyme catalyses adenosine(in) = adenosine(out). The catalysed reaction is guanosine(in) = guanosine(out). It catalyses the reaction inosine(in) = inosine(out). It carries out the reaction uridine(out) = uridine(in). The enzyme catalyses thymidine(in) = thymidine(out). The catalysed reaction is cytidine(in) = cytidine(out). It catalyses the reaction adenine(out) = adenine(in). It carries out the reaction guanine(out) = guanine(in). The enzyme catalyses thymine(out) = thymine(in). The catalysed reaction is uracil(in) = uracil(out). It catalyses the reaction hypoxanthine(out) = hypoxanthine(in). Its activity is regulated as follows. Transport activity is sensitive to low concentrations of the inhibitor nitrobenzylmercaptopurine riboside (NBMPR). In terms of biological role, uniporter involved in the facilitative transport of nucleosides and nucleobases, and contributes to maintaining their cellular homeostasis. Functions as a Na(+)-independent transporter. Involved in the transport of nucleosides such as adenosine, thymidine and uridine. Also transports purine nucleobases (hypoxanthine, adenine, guanine) and pyrimidine nucleobases (thymine, uracil). Mediates basolateral nucleoside uptake into Sertoli cells, thereby regulating the transport of nucleosides in testis across the blood-testis barrier. Regulates inosine levels in brown adipocytes tissues (BAT) and extracellular inosine levels, which controls BAT-dependent energy expenditure. This chain is Equilibrative nucleoside transporter 1, found in Rattus norvegicus (Rat).